A 524-amino-acid polypeptide reads, in one-letter code: MVAAMVAALRGPSRRFRPRTRALTRGTRGAASAAGGQQSFDLLVIGGGSGGLACAKEAAQLGKKVAVADYVEPSPRGTKWGLGGTCVNVGCIPKKLMHQAALLGGMIRDAHHYGWEVAQPVQHNWKTMAEAVQNHVKSLNWGHRVQLQDRKVKYFNIKASFVDEHTVRGVDKGGKATLLSAEHIVIATGGRPRYPTQVKGALEYGITSDDIFWLKESPGKTLVVGASYVALECAGFLTGIGLDTTVMMRSIPLRGFDQQMSSLVTEHMESHGTQFLKGCVPSHIKKLPTNQLQVTWEDHASGKEDTGTFDTVLWAIGRVPETRTLNLEKAGISTNPKNQKIIVDAQEATSVPHIYAIGDVAEGRPELTPTAIKAGKLLAQRLFGKSSTLMDYSNVPTTVFTPLEYGCVGLSEEEAVALHGQEHVEVYHAYYKPLEFTVADRDASQCYIKMVCMREPPQLVLGLHFLGPNAGEVTQGFALGIKCGASYAQVMQTVGIHPTCSEEVVKLHISKRSGLEPTVTGCUG.

The N-terminal 34 residues, 1–34 (MVAAMVAALRGPSRRFRPRTRALTRGTRGAASAA), are a transit peptide targeting the mitochondrion. 41–70 (DLLVIGGGSGGLACAKEAAQLGKKVAVADY) is a binding site for FAD. Lys-79 carries the N6-succinyllysine modification. Residues Cys-86 and Cys-91 are joined by a disulfide bond. Lys-175 and Lys-329 each carry N6-succinyllysine. His-497 serves as the catalytic Proton acceptor. A cross-link (cysteinyl-selenocysteine (Cys-Sec)) is located at residues 522–523 (CU). Sec-523 is a non-standard amino acid (selenocysteine).

It belongs to the class-I pyridine nucleotide-disulfide oxidoreductase family. As to quaternary structure, homodimer. It depends on FAD as a cofactor. As to expression, expressed in liver, heart, testis and kidney.

The protein localises to the mitochondrion. It carries out the reaction [thioredoxin]-dithiol + NADP(+) = [thioredoxin]-disulfide + NADPH + H(+). Functionally, involved in the control of reactive oxygen species levels and the regulation of mitochondrial redox homeostasis. Maintains thioredoxin in a reduced state. May play a role in redox-regulated cell signaling. This chain is Thioredoxin reductase 2, mitochondrial, found in Mus musculus (Mouse).